Consider the following 248-residue polypeptide: Pyridoxine 5'-phosphate synthase (248 aa).

Asn10 serves as a coordination point for 3-amino-2-oxopropyl phosphate. 12–13 is a binding site for 1-deoxy-D-xylulose 5-phosphate; that stretch reads DH. Arg21 provides a ligand contact to 3-amino-2-oxopropyl phosphate. His46 functions as the Proton acceptor in the catalytic mechanism. 1-deoxy-D-xylulose 5-phosphate contacts are provided by Arg48 and His53. The active-site Proton acceptor is Glu73. Thr103 serves as a coordination point for 1-deoxy-D-xylulose 5-phosphate. The Proton donor role is filled by His194. Residues Gly195 and 216-217 each bind 3-amino-2-oxopropyl phosphate; that span reads GH.

It belongs to the PNP synthase family. In terms of assembly, homooctamer; tetramer of dimers.

Its subcellular location is the cytoplasm. It catalyses the reaction 3-amino-2-oxopropyl phosphate + 1-deoxy-D-xylulose 5-phosphate = pyridoxine 5'-phosphate + phosphate + 2 H2O + H(+). It functions in the pathway cofactor biosynthesis; pyridoxine 5'-phosphate biosynthesis; pyridoxine 5'-phosphate from D-erythrose 4-phosphate: step 5/5. Its function is as follows. Catalyzes the complicated ring closure reaction between the two acyclic compounds 1-deoxy-D-xylulose-5-phosphate (DXP) and 3-amino-2-oxopropyl phosphate (1-amino-acetone-3-phosphate or AAP) to form pyridoxine 5'-phosphate (PNP) and inorganic phosphate. This Legionella pneumophila (strain Lens) protein is Pyridoxine 5'-phosphate synthase.